Here is a 147-residue protein sequence, read N- to C-terminus: Large ribosomal subunit protein uL13 (147 aa).

The segment at P128–Q147 is disordered.

It belongs to the universal ribosomal protein uL13 family. Part of the 50S ribosomal subunit.

In terms of biological role, this protein is one of the early assembly proteins of the 50S ribosomal subunit, although it is not seen to bind rRNA by itself. It is important during the early stages of 50S assembly. The polypeptide is Large ribosomal subunit protein uL13 (Mycobacterium bovis (strain BCG / Pasteur 1173P2)).